We begin with the raw amino-acid sequence, 660 residues long: Leucine-rich repeat transmembrane protein FLRT2 (660 aa).

The signal sequence occupies residues 1–35 (MGLQTAKWPSHGTFVLKFWLIMSLGLYSHVSKLLA). 2 disulfides stabilise this stretch: Cys-36–Cys-42 and Cys-40–Cys-49. Residues 36–67 (CPSVCRCDRNFVYCNERSLTSVPLGIPEGVTV) form the LRRNT domain. Over 36–540 (CPSVCRCDRN…QTTSHTMGSP (505 aa)) the chain is Extracellular. LRR repeat units follow at residues 62 to 87 (PEGV…LHNV), 88 to 108 (QSVH…MNLP), 109 to 131 (KNVR…ALAQ), 132 to 157 (LLKL…AFRE), 159 to 181 (ISLK…LPVD), 183 to 202 (QELR…AFQN), 203 to 228 (LTSL…TFSH), 229 to 251 (LTKL…DLPG), 252 to 274 (THLI…AFAN), and 275 to 298 (LRKL…VFDH). Asn-202 carries N-linked (GlcNAc...) asparagine glycosylation. 2 disulfide bridges follow: Cys-314–Cys-339 and Cys-316–Cys-360. Residues 338–361 (MCQGPEQVRGMAVRELNMNLLSCP) enclose the LRRCT domain. Residues 372-396 (PAPSTVSPTTQSPTVSVPSPSRGSV) are compositionally biased toward low complexity. Residues 372–413 (PAPSTVSPTTQSPTVSVPSPSRGSVPPAPAPSKLPTIPDWDG) are disordered. Positions 419 to 517 (PPISERIQLS…ICSEATTHAS (99 aa)) constitute a Fibronectin type-III domain. The chain crosses the membrane as a helical span at residues 541 to 561 (FLLAGLIGGAVIFVLVVLLSV). At 562 to 660 (FCWHMHKKGR…SVPDLEHCHT (99 aa)) the chain is on the cytoplasmic side.

As to quaternary structure, self-associates (via leucine-rich repeats), giving rise to homooligomers. Interacts with FGFR1. Interacts with FGFR2. Interacts (via extracellular domain) with ADGRL1/LPHN1. Interacts (via extracellular domain) with ADGRL3 (via olfactomedin-like domain). Interacts (via extracellular domain) with UNC5D (via the first Ig-like domain). Can also interact (via extracellular domain) with UNC5B, but with much lower affinity. Interacts (via extracellular domain) with FN1. Post-translationally, N-glycosylated. Proteolytic cleavage in the juxtamembrane region gives rise to a soluble ectodomain. Cleavage is probably effected by a metalloprotease. As to expression, detected in brain (at protein level).

It localises to the cell membrane. The protein localises to the endoplasmic reticulum membrane. Its subcellular location is the synapse. The protein resides in the synaptosome. It is found in the cell junction. It localises to the focal adhesion. The protein localises to the secreted. Its subcellular location is the extracellular space. The protein resides in the extracellular matrix. It is found in the microsome membrane. Functions in cell-cell adhesion, cell migration and axon guidance. Mediates cell-cell adhesion via its interactions with ADGRL3 and probably also other latrophilins that are expressed at the surface of adjacent cells. May play a role in the migration of cortical neurons during brain development via its interaction with UNC5D. Mediates axon growth cone collapse and plays a repulsive role in neuron guidance via its interaction with UNC5D, and possibly also other UNC-5 family members. Plays a role in fibroblast growth factor-mediated signaling cascades. Required for normal organization of the cardiac basement membrane during embryogenesis, and for normal embryonic epicardium and heart morphogenesis. This Rattus norvegicus (Rat) protein is Leucine-rich repeat transmembrane protein FLRT2.